A 589-amino-acid polypeptide reads, in one-letter code: Protein MICRORCHIDIA 3 (589 aa).

The segment at 1 to 33 is disordered; it reads MAPESKNAGVSVVVNLDSDSDSDNDDGVGGRGA. Residues 542–589 are a coiled coil; it reads MRCEEYVKKETELEQTVSNLAKELEETKSKCARLALLVDAKRREMQQV.

It belongs to the MORC ATPase protein family. Homodimer and heterodimer. Component of an RNA-directed DNA methylation (RdDM) complex. Requires Mg(2+) as cofactor. It depends on Mn(2+) as a cofactor.

The protein localises to the nucleus. In terms of biological role, exhibits ATPase activity. Binds DNA/RNA in a non-specific manner and exhibits endonuclease activity. Probably involved in DNA repair. Involved in RNA-directed DNA methylation (RdDM) as a component of the RdDM machinery and required for gene silencing. May also be involved in the regulation of chromatin architecture to maintain gene silencing. The protein is Protein MICRORCHIDIA 3 of Arabidopsis thaliana (Mouse-ear cress).